Here is a 325-residue protein sequence, read N- to C-terminus: UPF0164 protein TP_0856 (325 aa).

The signal sequence occupies residues 1-28 (MVHYKSVFYKSAALVCGFVLAGASVAIA).

This sequence belongs to the UPF0164 family.

In Treponema pallidum (strain Nichols), this protein is UPF0164 protein TP_0856.